Reading from the N-terminus, the 127-residue chain is Large ribosomal subunit protein bL17 (127 aa).

The protein belongs to the bacterial ribosomal protein bL17 family. In terms of assembly, part of the 50S ribosomal subunit. Contacts protein L32.

The protein is Large ribosomal subunit protein bL17 of Lactobacillus helveticus (strain DPC 4571).